A 375-amino-acid polypeptide reads, in one-letter code: Alcohol dehydrogenase 4, mitochondrial (375 aa).

The transit peptide at 1–27 (MFRLARAQTALANKASVSRSFLRLNSS) directs the protein to the mitochondrion. The Zn(2+) site is built by Cys-71, His-94, Cys-125, Cys-128, Cys-131, Cys-139, and Cys-181. Residues 205–211 (GAAGGLG), Asp-229, Lys-234, 296–298 (VGL), and Arg-368 contribute to the NAD(+) site.

The protein belongs to the zinc-containing alcohol dehydrogenase family. Homotetramer. The cofactor is Zn(2+).

The protein localises to the mitochondrion matrix. It carries out the reaction a primary alcohol + NAD(+) = an aldehyde + NADH + H(+). The enzyme catalyses a secondary alcohol + NAD(+) = a ketone + NADH + H(+). The chain is Alcohol dehydrogenase 4, mitochondrial (ADH4) from Kluyveromyces lactis (strain ATCC 8585 / CBS 2359 / DSM 70799 / NBRC 1267 / NRRL Y-1140 / WM37) (Yeast).